A 717-amino-acid chain; its full sequence is HHIP-like protein 2 (717 aa).

A signal peptide spans 1–40; that stretch reads MLGKHTSPHTVPGHRAPWLSPGIFCLGLPFLLGWVGLLQG. Intrachain disulfides connect cysteine 203–cysteine 545, cysteine 207–cysteine 551, cysteine 423–cysteine 441, and cysteine 508–cysteine 607. Residues 642 to 717 are disordered; that stretch reads ARKASNATFT…MRQAAGRSHP (76 aa). The segment covering 646 to 662 has biased composition (polar residues); sequence SNATFTSSSDRVASQKG. An N-linked (GlcNAc...) asparagine glycan is attached at asparagine 647. Positions 672 to 687 are enriched in basic residues; the sequence is SSKKTFRRPGTKKKSR.

The protein belongs to the HHIP family.

It localises to the secreted. The protein is HHIP-like protein 2 (Hhipl2) of Mus musculus (Mouse).